Here is a 47-residue protein sequence, read N- to C-terminus: Packaging protein P22 (47 aa).

The helical transmembrane segment at 22-42 (TGWLAFVGLIIVAIILWQQII) threads the bilayer.

Heterodimer of P20 and P22; further multimerizes as hexamers of heterodimers. Part of the dodecameric portal complex that is composed of the packaging efficiency factor P6, the DNA packaging ATPase P9, and the internal heterododecamer P20/P22 which spans the virion inner membrane.

Its subcellular location is the virion membrane. Its function is as follows. Together with P22, forms the internal part of the portal complex embeded in the virion internal membrane and which plays critical roles in genome packaging and genome ejection. Both proteins multimerize as a single ring-shaped heterdodecamer arranged around a central channel and interact with the P6/P9 external part of the portal. This chain is Packaging protein P22 (XXII), found in Enterobacteria phage PRD1 (Bacteriophage PRD1).